A 295-amino-acid chain; its full sequence is CCAAT-binding factor complex subunit php4 (295 aa).

Residues 1 to 19 (MESSKSPSEVEKSSSASPA) show a composition bias toward low complexity. Residues 1-69 (MESSKSPSEV…GPTSALSVEE (69 aa)) form a disordered region. A coiled-coil region spans residues 73-111 (RVREKQYQDTIGKLQKENNELLEQLEMLQAQLKNSTLDS). Positions 93 to 100 (LLEQLEML) match the Nuclear export signal motif. Positions 108–130 (TLDSPKEVEVNSEVVKPDSATTE) are disordered.

Component of tha CCAAT-binding complex composed of at least php2, php3, php4 and php5. Interacts with crm1 and grx4.

It is found in the cytoplasm. The protein resides in the nucleus. Its subcellular location is the cytoskeleton. It localises to the spindle pole. In terms of biological role, component of the transcription regulatory CCAAT-binding complex. Required for the reprogramming of the cell for iron use. Down-regulates pcl1, sdh4, and isa1 underlow-iron conditions. The protein is CCAAT-binding factor complex subunit php4 (php4) of Schizosaccharomyces pombe (strain 972 / ATCC 24843) (Fission yeast).